A 242-amino-acid chain; its full sequence is Uridylate kinase (242 aa).

15 to 18 contributes to the ATP binding site; the sequence is KLSG. Gly57 is a binding site for UMP. Gly58 and Arg62 together coordinate ATP. Residues Asp78 and 139-146 each bind UMP; that span reads TGNPFFTT. Residues Thr166, Tyr172, and Asp175 each coordinate ATP.

This sequence belongs to the UMP kinase family. Homohexamer.

Its subcellular location is the cytoplasm. It carries out the reaction UMP + ATP = UDP + ADP. Its pathway is pyrimidine metabolism; CTP biosynthesis via de novo pathway; UDP from UMP (UMPK route): step 1/1. Inhibited by UTP. Catalyzes the reversible phosphorylation of UMP to UDP. This is Uridylate kinase from Acinetobacter baylyi (strain ATCC 33305 / BD413 / ADP1).